The primary structure comprises 322 residues: L-asparaginase (322 aa).

The 320-residue stretch at 3 to 322 (KKVALITTGG…KEGIKDKFCY (320 aa)) folds into the Asparaginase/glutaminase domain. The active-site O-isoaspartyl threonine intermediate is threonine 13. Residues serine 56 and 89 to 90 (TD) contribute to the substrate site.

It belongs to the asparaginase 1 family. Homotetramer.

The protein resides in the cytoplasm. The catalysed reaction is L-asparagine + H2O = L-aspartate + NH4(+). This Bacillus licheniformis protein is L-asparaginase (ansA).